Here is a 298-residue protein sequence, read N- to C-terminus: Probable 2-(5''-triphosphoribosyl)-3'-dephosphocoenzyme-A synthase 2 (298 aa).

This sequence belongs to the CitG/MdcB family.

The enzyme catalyses 3'-dephospho-CoA + ATP = 2'-(5''-triphospho-alpha-D-ribosyl)-3'-dephospho-CoA + adenine. This is Probable 2-(5''-triphosphoribosyl)-3'-dephosphocoenzyme-A synthase 2 from Salmonella choleraesuis (strain SC-B67).